A 494-amino-acid chain; its full sequence is Acetyl-coenzyme A carboxylase carboxyl transferase subunit beta, chloroplastic (494 aa).

Residues 230–494 form the CoA carboxyltransferase N-terminal domain; that stretch reads LWVQCENCYG…LHGFFPLNQN (265 aa). Zn(2+)-binding residues include C234, C237, C253, and C256. Residues 234–256 form a C4-type zinc finger; it reads CENCYGLNYKKFFRSKMNICEQC.

Belongs to the AccD/PCCB family. As to quaternary structure, acetyl-CoA carboxylase is a heterohexamer composed of biotin carboxyl carrier protein, biotin carboxylase and 2 subunits each of ACCase subunit alpha and ACCase plastid-coded subunit beta (accD). Zn(2+) serves as cofactor.

The protein localises to the plastid. It localises to the chloroplast stroma. The enzyme catalyses N(6)-carboxybiotinyl-L-lysyl-[protein] + acetyl-CoA = N(6)-biotinyl-L-lysyl-[protein] + malonyl-CoA. The protein operates within lipid metabolism; malonyl-CoA biosynthesis; malonyl-CoA from acetyl-CoA: step 1/1. Functionally, component of the acetyl coenzyme A carboxylase (ACC) complex. Biotin carboxylase (BC) catalyzes the carboxylation of biotin on its carrier protein (BCCP) and then the CO(2) group is transferred by the transcarboxylase to acetyl-CoA to form malonyl-CoA. The polypeptide is Acetyl-coenzyme A carboxylase carboxyl transferase subunit beta, chloroplastic (Drimys granadensis).